The chain runs to 398 residues: 1-deoxy-D-xylulose 5-phosphate reductoisomerase (398 aa).

NADPH-binding residues include threonine 11, glycine 12, serine 13, isoleucine 14, arginine 38, asparagine 39, and asparagine 125. Lysine 126 serves as a coordination point for 1-deoxy-D-xylulose 5-phosphate. Glutamate 127 is an NADPH binding site. Aspartate 151 contributes to the Mn(2+) binding site. 1-deoxy-D-xylulose 5-phosphate contacts are provided by serine 152, glutamate 153, serine 179, and histidine 202. Mn(2+) is bound at residue glutamate 153. Glycine 208 is a binding site for NADPH. Residues serine 215, asparagine 220, lysine 221, and glutamate 224 each contribute to the 1-deoxy-D-xylulose 5-phosphate site. Position 224 (glutamate 224) interacts with Mn(2+).

This sequence belongs to the DXR family. Mg(2+) is required as a cofactor. It depends on Mn(2+) as a cofactor.

The catalysed reaction is 2-C-methyl-D-erythritol 4-phosphate + NADP(+) = 1-deoxy-D-xylulose 5-phosphate + NADPH + H(+). It functions in the pathway isoprenoid biosynthesis; isopentenyl diphosphate biosynthesis via DXP pathway; isopentenyl diphosphate from 1-deoxy-D-xylulose 5-phosphate: step 1/6. Catalyzes the NADPH-dependent rearrangement and reduction of 1-deoxy-D-xylulose-5-phosphate (DXP) to 2-C-methyl-D-erythritol 4-phosphate (MEP). The chain is 1-deoxy-D-xylulose 5-phosphate reductoisomerase from Burkholderia lata (strain ATCC 17760 / DSM 23089 / LMG 22485 / NCIMB 9086 / R18194 / 383).